A 397-amino-acid chain; its full sequence is Argininosuccinate synthase (397 aa).

9–17 provides a ligand contact to ATP; it reads AYSGGLDTS. Tyrosine 87 lines the L-citrulline pocket. Glycine 117 contributes to the ATP binding site. Threonine 119, asparagine 123, and aspartate 124 together coordinate L-aspartate. Residue asparagine 123 participates in L-citrulline binding. L-citrulline is bound by residues arginine 127, serine 175, serine 184, glutamate 257, and tyrosine 269.

Belongs to the argininosuccinate synthase family. Type 1 subfamily. In terms of assembly, homotetramer.

It is found in the cytoplasm. It carries out the reaction L-citrulline + L-aspartate + ATP = 2-(N(omega)-L-arginino)succinate + AMP + diphosphate + H(+). It functions in the pathway amino-acid biosynthesis; L-arginine biosynthesis; L-arginine from L-ornithine and carbamoyl phosphate: step 2/3. This chain is Argininosuccinate synthase, found in Dictyoglomus thermophilum (strain ATCC 35947 / DSM 3960 / H-6-12).